A 252-amino-acid polypeptide reads, in one-letter code: D-aminoacyl-tRNA deacylase (252 aa).

This sequence belongs to the DtdA deacylase family. As to quaternary structure, monomer. Requires Zn(2+) as cofactor.

The enzyme catalyses a D-aminoacyl-tRNA + H2O = a tRNA + a D-alpha-amino acid + H(+). It carries out the reaction glycyl-tRNA(Ala) + H2O = tRNA(Ala) + glycine + H(+). D-aminoacyl-tRNA deacylase with broad substrate specificity. By recycling D-aminoacyl-tRNA to D-amino acids and free tRNA molecules, this enzyme counteracts the toxicity associated with the formation of D-aminoacyl-tRNA entities in vivo. This Pyrobaculum neutrophilum (strain DSM 2338 / JCM 9278 / NBRC 100436 / V24Sta) (Thermoproteus neutrophilus) protein is D-aminoacyl-tRNA deacylase.